The chain runs to 688 residues: Glycine--tRNA ligase beta subunit (688 aa).

Belongs to the class-II aminoacyl-tRNA synthetase family. As to quaternary structure, tetramer of two alpha and two beta subunits.

The protein localises to the cytoplasm. The catalysed reaction is tRNA(Gly) + glycine + ATP = glycyl-tRNA(Gly) + AMP + diphosphate. This is Glycine--tRNA ligase beta subunit from Aliivibrio fischeri (strain ATCC 700601 / ES114) (Vibrio fischeri).